The primary structure comprises 215 residues: Ependymin-2 (215 aa).

An N-terminal signal peptide occupies residues 1–20 (MHTVKLLCVVFSCLCAVAWA). N-linked (GlcNAc...) asparagine glycans are attached at residues asparagine 71 and asparagine 94.

The protein belongs to the ependymin family. As to quaternary structure, forms disulfide-linked dimers. Different glycosylation variants are known as EPD-beta and EPD-gamma. Post-translationally, binds calcium through the terminal sialic acids. EPDs are synthesized in the meninx and secreted in the cerebrospinal fluid.

The protein localises to the secreted. Its function is as follows. May play a role in neural plasticity. May be involved during axon regeneration. This is Ependymin-2 (epd2) from Carassius auratus (Goldfish).